Reading from the N-terminus, the 561-residue chain is Probable galacturonosyltransferase 9 (561 aa).

Topologically, residues 1-27 are cytoplasmic; that stretch reads MAVAFRGGRGGVGSGQSTGLRSFFSYR. A helical; Signal-anchor for type II membrane protein transmembrane segment spans residues 28-48; sequence IFISALFSFLFLATFSVVLNS. Residues 49–561 are Lumenal-facing; sequence SRHQPHQDHT…EFVQMCNFGL (513 aa). Residues asparagine 124, asparagine 320, asparagine 346, and asparagine 426 are each glycosylated (N-linked (GlcNAc...) asparagine).

It belongs to the glycosyltransferase 8 family. As to expression, expressed in roots, inflorescences, siliques, leaves and stems.

The protein localises to the golgi apparatus membrane. It participates in glycan metabolism; pectin biosynthesis. In terms of biological role, may be involved in pectin synthesis. The polypeptide is Probable galacturonosyltransferase 9 (GAUT9) (Arabidopsis thaliana (Mouse-ear cress)).